A 375-amino-acid polypeptide reads, in one-letter code: Chaperone protein DnaJ (375 aa).

Residues 5–70 (DYYEVLGVAR…NKRRAYDAHG (66 aa)) form the J domain. A CR-type zinc finger spans residues 131 to 208 (GIERRIEIPT…CHGAGRVEED (78 aa)). The Zn(2+) site is built by Cys144, Cys147, Cys160, Cys163, Cys182, Cys185, Cys196, and Cys199. CXXCXGXG motif repeat units follow at residues 144 to 151 (CAPCHGSG), 160 to 167 (CGTCHGRG), 182 to 189 (CPHCDGRG), and 196 to 203 (CKTCHGAG).

It belongs to the DnaJ family. As to quaternary structure, homodimer. The cofactor is Zn(2+).

It is found in the cytoplasm. Functionally, participates actively in the response to hyperosmotic and heat shock by preventing the aggregation of stress-denatured proteins and by disaggregating proteins, also in an autonomous, DnaK-independent fashion. Unfolded proteins bind initially to DnaJ; upon interaction with the DnaJ-bound protein, DnaK hydrolyzes its bound ATP, resulting in the formation of a stable complex. GrpE releases ADP from DnaK; ATP binding to DnaK triggers the release of the substrate protein, thus completing the reaction cycle. Several rounds of ATP-dependent interactions between DnaJ, DnaK and GrpE are required for fully efficient folding. Also involved, together with DnaK and GrpE, in the DNA replication of plasmids through activation of initiation proteins. The sequence is that of Chaperone protein DnaJ from Xanthomonas euvesicatoria pv. vesicatoria (strain 85-10) (Xanthomonas campestris pv. vesicatoria).